A 186-amino-acid polypeptide reads, in one-letter code: MSHSLAEHYHEILVGIGENPQREGLLDTPRRAAKAMQYLCNGYAQDLHEVVNGALFESENDEMIVVRDIELYSLCEHHMLPFIGKAHVAYLPTGRVLGLSKVARVVDMFARRLQIQENLTRQIAYAVQEVTDAAGVGVVIEAKHMCMMMRGVEKQNSVMISSVMLGAFRDAPSTRHEFLNLIGRHN.

This sequence belongs to the GTP cyclohydrolase I family. In terms of assembly, homomer.

The enzyme catalyses GTP + H2O = 7,8-dihydroneopterin 3'-triphosphate + formate + H(+). It functions in the pathway cofactor biosynthesis; 7,8-dihydroneopterin triphosphate biosynthesis; 7,8-dihydroneopterin triphosphate from GTP: step 1/1. This chain is GTP cyclohydrolase 1 2, found in Pseudomonas putida (strain ATCC 47054 / DSM 6125 / CFBP 8728 / NCIMB 11950 / KT2440).